The chain runs to 410 residues: Histidine--tRNA ligase (410 aa).

Belongs to the class-II aminoacyl-tRNA synthetase family.

The protein localises to the cytoplasm. The enzyme catalyses tRNA(His) + L-histidine + ATP = L-histidyl-tRNA(His) + AMP + diphosphate + H(+). The protein is Histidine--tRNA ligase of Methanocorpusculum labreanum (strain ATCC 43576 / DSM 4855 / Z).